Here is a 55-residue protein sequence, read N- to C-terminus: Large ribosomal subunit protein bL32 (55 aa).

The protein belongs to the bacterial ribosomal protein bL32 family.

The protein is Large ribosomal subunit protein bL32 of Aeromonas hydrophila subsp. hydrophila (strain ATCC 7966 / DSM 30187 / BCRC 13018 / CCUG 14551 / JCM 1027 / KCTC 2358 / NCIMB 9240 / NCTC 8049).